The chain runs to 1031 residues: Toll-like receptor 9 (1031 aa).

The N-terminal stretch at methionine 1–alanine 25 is a signal peptide. At glutamine 26–aspartate 817 the chain is on the extracellular side. An intrachain disulfide couples cysteine 35 to cysteine 45. Tryptophan 47–lysine 51 is a binding site for DNA. LRR repeat units lie at residues arginine 62–histidine 85, serine 87–cysteine 110, valine 122–serine 147, leucine 150–leucine 166, histidine 167–valine 190, leucine 198–serine 221, glutamate 223–asparagine 242, leucine 243–cysteine 268, leucine 283–alanine 306, glycine 308–glycine 332, leucine 333–leucine 356, leucine 363–serine 386, leucine 390–alanine 413, proline 415–valine 440, cysteine 470–arginine 494, serine 496–proline 519, leucine 520–glutamate 543, proline 545–alanine 572, leucine 574–alanine 598, leucine 600–histidine 622, leucine 627–asparagine 650, proline 652–leucine 675, leucine 676–asparagine 699, threonine 701–leucine 723, alanine 724–serine 747, and alanine 749–aspartate 772. N-linked (GlcNAc...) asparagine glycosylation is present at asparagine 64. DNA contacts are provided by residues serine 72–histidine 77 and lysine 95–proline 109. The cysteines at positions 98 and 110 are disulfide-linked. Asparagine 129 is a glycosylation site (N-linked (GlcNAc...) asparagine). Residues tyrosine 132, arginine 152, and tyrosine 179–lysine 181 contribute to the DNA site. A disulfide bridge connects residues cysteine 178 and cysteine 184. N-linked (GlcNAc...) asparagine glycosylation occurs at asparagine 200. Tyrosine 208 lines the DNA pocket. Asparagine 210 and asparagine 242 each carry an N-linked (GlcNAc...) asparagine glycan. Intrachain disulfides connect cysteine 255–cysteine 268 and cysteine 258–cysteine 265. A lipid anchor (S-palmitoyl cysteine) is attached at cysteine 258. Residue arginine 262 coordinates DNA. Cysteine 265 carries S-palmitoyl cysteine lipidation. The N-linked (GlcNAc...) asparagine glycan is linked to asparagine 340. A disulfide bond links cysteine 470 and cysteine 500. N-linked (GlcNAc...) asparagine glycosylation is found at asparagine 474 and asparagine 513. Residue asparagine 567 is glycosylated (N-linked (GlcNAc...) asparagine). N-linked (GlcNAc...) asparagine glycans are attached at residues asparagine 669, asparagine 694, and asparagine 699. N-linked (GlcNAc...) asparagine glycosylation occurs at asparagine 731. 2 disulfide bridges follow: cysteine 764–cysteine 790 and cysteine 766–cysteine 809. A helical transmembrane segment spans residues cysteine 818–leucine 838. The Cytoplasmic segment spans residues cysteine 839–glutamate 1031. One can recognise a TIR domain in the interval leucine 866 to leucine 1011.

The protein belongs to the Toll-like receptor family. As to quaternary structure, monomer and homodimer. Exists as a monomer in the absence of unmethylated cytidine-phosphate-guanosine (CpG) ligand. Proteolytic processing of an insertion loop (Z-loop) is required for homodimerization upon binding to the unmethylated CpG ligand leading to its activation. Interacts with MYD88 via their respective TIR domains. Interacts with BTK. Interacts (via transmembrane domain) with UNC93B1. Interacts with CD300LH; the interaction may promote full activation of TLR9-triggered innate responses. Interacts with CNPY3 and HSP90B1; this interaction is required for proper folding in the endoplasmic reticulum. Interacts with SMPDL3B. Interacts with CD82; this interaction is essential for TLR9-dependent myddosome formation in response to CpG stimulation. Post-translationally, activated by proteolytic cleavage of the flexible loop between repeats LRR14 and LRR15 within the ectodomain. Cleavage requires UNC93B1. Proteolytically processed by first removing the majority of the ectodomain by either asparagine endopeptidase (AEP) or a cathepsin followed by a trimming event that is solely cathepsin mediated and required for optimal receptor signaling. Palmitoylated by ZDHHC3 in the Golgi regulates TLR9 trafficking from the Golgi to endosomes. Depalmitoylation by PPT1 controls the release of TLR9 from UNC93B1 in endosomes.

Its subcellular location is the endoplasmic reticulum membrane. It localises to the endosome. It is found in the lysosome. The protein localises to the cytoplasmic vesicle. The protein resides in the phagosome. Its function is as follows. Key component of innate and adaptive immunity. TLRs (Toll-like receptors) control host immune response against pathogens through recognition of molecular patterns specific to microorganisms. TLR9 is a nucleotide-sensing TLR which is activated by unmethylated cytidine-phosphate-guanosine (CpG) dinucleotides. Acts via MYD88 and TRAF6, leading to NF-kappa-B activation, cytokine secretion and the inflammatory response. Upon CpG stimulation, induces B-cell proliferation, activation, survival and antibody production. The polypeptide is Toll-like receptor 9 (TLR9) (Felis catus (Cat)).